We begin with the raw amino-acid sequence, 403 residues long: RILP-like protein 1 (403 aa).

A Phosphoserine modification is found at Ser-7. Positions 10 to 97 constitute an RH1 domain; it reads AAESALEKNV…RLERMDRIEK (88 aa). S-nitrosocysteine is present on Cys-47. Residues 76–258 adopt a coiled-coil conformation; sequence ELDELRLELD…KLRERLQGEH (183 aa). Disordered stretches follow at residues 254–275, 327–352, and 384–403; these read LQGE…GEES, EMEE…PESG, and ANTH…LQHL. Ser-259 is modified (phosphoserine). The span at 262 to 275 shows a compositional bias: acidic residues; it reads GEEEPETEPVGEES. The RH2 domain occupies 291–356; that stretch reads RPRFTLQELR…PQPESGIKRL (66 aa). Over residues 394 to 403 the composition is skewed to polar residues; it reads EQGQEALQHL.

It belongs to the RILPL family. As to quaternary structure, interacts (when S-nitrosylated) with GAPDH. Interacts with RAB8A; interaction is dependent on the phosphorylation of 'Thr-72' of RAB8A. Interacts with RAB10 and RAB12; the interaction is dependent on the phosphorylation of 'Thr-73' of RAB10, and 'Ser-105' of RAB12. S-nitrosylation is required for the interaction with GAPDH. Widely expressed. Expressed at lower level in liver and kidney.

Its subcellular location is the cytoplasm. The protein localises to the cytosol. It localises to the cytoskeleton. It is found in the microtubule organizing center. The protein resides in the centrosome. Its subcellular location is the centriole. The protein localises to the cilium basal body. In terms of biological role, plays a role in the regulation of cell shape and polarity. Plays a role in cellular protein transport, including protein transport away from primary cilia. Neuroprotective protein, which acts by sequestring GAPDH in the cytosol and prevent the apoptotic function of GAPDH in the nucleus. Competes with SIAH1 for binding GAPDH. Does not regulate lysosomal morphology and distribution. Binds to RAB10 following LRRK2-mediated RAB10 phosphorylation which leads to inhibition of ciliogenesis. In Homo sapiens (Human), this protein is RILP-like protein 1 (RILPL1).